The following is a 396-amino-acid chain: tRNA-specific 2-thiouridylase MnmA (396 aa).

ATP is bound by residues 11 to 18 and Met-37; that span reads GLSGGVDS. Residues 97-99 form an interaction with target base in tRNA region; sequence NPD. Residue Cys-102 is the Nucleophile of the active site. Cysteines 102 and 225 form a disulfide. Position 126 (Gly-126) interacts with ATP. An interaction with tRNA region spans residues 175–177; sequence KDQ. Residue Cys-225 is the Cysteine persulfide intermediate of the active site. Positions 343-344 are interaction with tRNA; sequence RY.

Belongs to the MnmA/TRMU family.

It is found in the cytoplasm. It catalyses the reaction S-sulfanyl-L-cysteinyl-[protein] + uridine(34) in tRNA + AH2 + ATP = 2-thiouridine(34) in tRNA + L-cysteinyl-[protein] + A + AMP + diphosphate + H(+). Functionally, catalyzes the 2-thiolation of uridine at the wobble position (U34) of tRNA, leading to the formation of s(2)U34. This Methylibium petroleiphilum (strain ATCC BAA-1232 / LMG 22953 / PM1) protein is tRNA-specific 2-thiouridylase MnmA.